We begin with the raw amino-acid sequence, 304 residues long: E3 ubiquitin-protein ligase RNF115 (304 aa).

Ala2 bears the N-acetylalanine mark. A disordered region spans residues 95-138; that stretch reads PLDQDNRANERGHQTHTDFWGARPPRLPLGRRYRSRGSSRPDRS. Positions 98-110 are enriched in basic and acidic residues; that stretch reads QDNRANERGHQTH. A phosphoserine; by PKB/AKT1 mark is found at Ser132 and Ser133. An RING-type zinc finger spans residues 228–269; that stretch reads CPVCKEDYTVEEEVRQLPCNHFFHSSCIVPWLELHDTCPVCR. Residues 272–304 are disordered; that stretch reads LNGEDSTRQSQSTEASASNRFSNDSQLHDRWTF. Over residues 279–296 the composition is skewed to polar residues; sequence RQSQSTEASASNRFSNDS.

In terms of assembly, interacts with RAB7A. Interacts with EGFR and FLT3. Interacts with BST2. Interacts with STX17. Interacts with YWHAE. Post-translationally, phosphorylated by AKT1, allowing association with the 14-3-3 chaperones that facilitates associating with TLRs. In terms of processing, RING-type zinc finger-dependent and E2-dependent autoubiquitination. Deubiquitinated by USP9X; antogonizing its autoubiquitination and subsequent proteasomal degradation. In terms of tissue distribution, expressed at extremely low levels in normal breast, prostate, lung, colon. Higher levels of expression are detected in heart, skeletal muscle, testis as well as in breast and prostate cancer cells.

The protein resides in the cytoplasm. The protein localises to the nucleus. It is found in the endoplasmic reticulum. Its subcellular location is the golgi apparatus. It carries out the reaction S-ubiquitinyl-[E2 ubiquitin-conjugating enzyme]-L-cysteine + [acceptor protein]-L-lysine = [E2 ubiquitin-conjugating enzyme]-L-cysteine + N(6)-ubiquitinyl-[acceptor protein]-L-lysine.. It functions in the pathway protein modification; protein ubiquitination. Its function is as follows. E3 ubiquitin-protein ligase that catalyzes the 'Lys-48'- and/or 'Lys-63'-linked polyubiquitination of various substrates and thereby plays a role in a number of signaling pathways including autophagy, innate immunity, cell proliferation and cell death. Plays a role in the endosomal trafficking and degradation of membrane receptors including EGFR, FLT3, MET and CXCR4 through their polyubiquitination. Participates together with BST2 in antiviral immunity by facilitating the internalization of HIV-1 virions into intracellular vesicles leading to their lysosomal degradation. Also possesses an antiviral activity independently of BST2 by promoting retroviral GAG proteins ubiquitination, redistribution to endo-lysosomal compartments and, ultimately, lysosomal degradation. Catalyzes distinct types of ubiquitination on MAVS and STING1 at different phases of viral infection to promote innate antiviral response. Mediates the 'Lys-48'-linked ubiquitination of MAVS leading to its proteasomal degradation and ubiquitinates STING1 via 'Lys-63'-linked polyubiquitination, critical for its oligomerization and the subsequent recruitment of TBK1. Plays a positive role in the autophagosome-lysosome fusion by interacting with STX17 and enhancing its stability without affecting 'Lys-48'- or 'Lys-63'-linked polyubiquitination levels, which in turn promotes autophagosome maturation. Negatively regulates TLR-induced expression of proinflammatory cytokines by catalyzing 'Lys-11'-linked ubiquitination of RAB1A and RAB13 to inhibit post-ER trafficking of TLRs to the Golgi by RAB1A and subsequently from the Golgi apparatus to the cell surface by RAB13. This is E3 ubiquitin-protein ligase RNF115 from Homo sapiens (Human).